We begin with the raw amino-acid sequence, 292 residues long: Diaminopimelate epimerase (292 aa).

Residues N13, Q46, and N66 each contribute to the substrate site. The active-site Proton donor is C75. Substrate contacts are provided by residues 76–77 (GN), N170, N203, and 221–222 (ER). Residue C230 is the Proton acceptor of the active site. 231–232 (GT) serves as a coordination point for substrate.

It belongs to the diaminopimelate epimerase family. In terms of assembly, homodimer.

The protein resides in the cytoplasm. The enzyme catalyses (2S,6S)-2,6-diaminopimelate = meso-2,6-diaminopimelate. Its pathway is amino-acid biosynthesis; L-lysine biosynthesis via DAP pathway; DL-2,6-diaminopimelate from LL-2,6-diaminopimelate: step 1/1. Its function is as follows. Catalyzes the stereoinversion of LL-2,6-diaminopimelate (L,L-DAP) to meso-diaminopimelate (meso-DAP), a precursor of L-lysine and an essential component of the bacterial peptidoglycan. The polypeptide is Diaminopimelate epimerase (Acidovorax ebreus (strain TPSY) (Diaphorobacter sp. (strain TPSY))).